Consider the following 1169-residue polypeptide: Transcription-repair-coupling factor (1169 aa).

Residues 634–795 (DMERARPMDR…MLGVRDLSVI (162 aa)) form the Helicase ATP-binding domain. Residue 647–654 (GDVGYGKT) participates in ATP binding. Positions 748–751 (DEEQ) match the DEEQ box motif. A Helicase C-terminal domain is found at 809-970 (VLEQNTNFIK…GFKIAMRDLN (162 aa)).

This sequence in the N-terminal section; belongs to the UvrB family. It in the C-terminal section; belongs to the helicase family. RecG subfamily.

It localises to the cytoplasm. Functionally, couples transcription and DNA repair by recognizing RNA polymerase (RNAP) stalled at DNA lesions. Mediates ATP-dependent release of RNAP and its truncated transcript from the DNA, and recruitment of nucleotide excision repair machinery to the damaged site. This Staphylococcus epidermidis (strain ATCC 35984 / DSM 28319 / BCRC 17069 / CCUG 31568 / BM 3577 / RP62A) protein is Transcription-repair-coupling factor.